We begin with the raw amino-acid sequence, 282 residues long: MMPSTPRTSIPSITLNDENTMPLLGLGVAELSEDETERAVLAALEIGCRLIDTAAAYGNEAAVSRAIAASGIPRAQLFVTTKLATPDQGFTKSQDACNASLDRLGMDYVDLYLIHWPAPPVGQYVDAWGGMIQSRGEGHARSIGVCNFTEEHLSAIIDLTFVTPAVNQIELHPLLNQDEMRKSNAQHNVITQSYTPLVLGRLMDNSTLTAIAAEYGKTPAQVLLRWNLQLGNAVVFRSAKAEHIASNFDVFDFELAVNHMDAMNELHDGTRLRPDPETYAGS.

The Proton donor role is filled by Tyr57. NADPH contacts are provided by Leu197, Val235, Arg237, Ser238, Ala239, Ser246, Asn247, and Arg273.

It belongs to the aldo/keto reductase family.

The polypeptide is Aldo-keto reductase ML1669 (Mycobacterium leprae (strain TN)).